Consider the following 296-residue polypeptide: UDP-N-acetylglucosamine transporter TMEM241 (296 aa).

10 helical membrane passes run 7-29 (LVGL…VLSV), 32-52 (FTYP…LLHV), 67-87 (SHVL…YAGS), 93-113 (LAIP…CGYQ), 121-141 (TSPA…CLPF), 146-166 (FNPD…AYKI), 187-207 (IFSV…FSVL), 211-231 (FLYF…GFFL), 250-270 (WIFF…DAIL), and 271-291 (TSAT…LVFS).

It belongs to the nucleotide-sugar transporter family. SLC35A subfamily.

The protein localises to the golgi apparatus. It localises to the cis-Golgi network membrane. In terms of biological role, golgi-localized UDP-N-acetylglucosamine (UDP-GlcNAc) transporter that transports UDP-N-acetylglucosamine into Golgi lumen. Contributes to lysosomal targeting of NPC2, a key protein required for lysosomal cholesterol exiting, and that utilizes the mannose-6-phosphate (M6P) modification pathway for its lysosomal targeting. The chain is UDP-N-acetylglucosamine transporter TMEM241 from Homo sapiens (Human).